A 693-amino-acid chain; its full sequence is Phosphoribosylformylglycinamidine synthase subunit PurL (693 aa).

The active site involves H34. ATP contacts are provided by Y37 and K76. A Mg(2+)-binding site is contributed by E78. Substrate contacts are provided by residues 79 to 82 (SHNH) and R101. The active-site Proton acceptor is H80. Position 102 (D102) interacts with Mg(2+). Position 222 (Q222) interacts with substrate. Residue D248 participates in Mg(2+) binding. 292 to 294 (ETQ) lines the substrate pocket. Residues D470 and G507 each coordinate ATP. A substrate-binding site is contributed by S510.

Belongs to the FGAMS family. In terms of assembly, monomer. Part of the FGAM synthase complex composed of 1 PurL, 1 PurQ and 2 PurS subunits.

Its subcellular location is the cytoplasm. The enzyme catalyses N(2)-formyl-N(1)-(5-phospho-beta-D-ribosyl)glycinamide + L-glutamine + ATP + H2O = 2-formamido-N(1)-(5-O-phospho-beta-D-ribosyl)acetamidine + L-glutamate + ADP + phosphate + H(+). It participates in purine metabolism; IMP biosynthesis via de novo pathway; 5-amino-1-(5-phospho-D-ribosyl)imidazole from N(2)-formyl-N(1)-(5-phospho-D-ribosyl)glycinamide: step 1/2. Part of the phosphoribosylformylglycinamidine synthase complex involved in the purines biosynthetic pathway. Catalyzes the ATP-dependent conversion of formylglycinamide ribonucleotide (FGAR) and glutamine to yield formylglycinamidine ribonucleotide (FGAM) and glutamate. The FGAM synthase complex is composed of three subunits. PurQ produces an ammonia molecule by converting glutamine to glutamate. PurL transfers the ammonia molecule to FGAR to form FGAM in an ATP-dependent manner. PurS interacts with PurQ and PurL and is thought to assist in the transfer of the ammonia molecule from PurQ to PurL. The sequence is that of Phosphoribosylformylglycinamidine synthase subunit PurL from Pyrobaculum islandicum (strain DSM 4184 / JCM 9189 / GEO3).